A 302-amino-acid polypeptide reads, in one-letter code: Small ribosomal subunit protein uS3 (302 aa).

A KH type-2 domain is found at 17–86 (IDEFFAEELA…DPQIDVQEVE (70 aa)). Positions 222 to 302 (EDADAEDADA…EMDDEDGGAE (81 aa)) are disordered.

This sequence belongs to the universal ribosomal protein uS3 family. Part of the 30S ribosomal subunit.

In terms of biological role, binds the lower part of the 30S subunit head. The protein is Small ribosomal subunit protein uS3 of Halobacterium salinarum (strain ATCC 700922 / JCM 11081 / NRC-1) (Halobacterium halobium).